The sequence spans 359 residues: Peptide chain release factor 1 (359 aa).

N5-methylglutamine is present on Q235.

This sequence belongs to the prokaryotic/mitochondrial release factor family. Methylated by PrmC. Methylation increases the termination efficiency of RF1.

It localises to the cytoplasm. Its function is as follows. Peptide chain release factor 1 directs the termination of translation in response to the peptide chain termination codons UAG and UAA. The chain is Peptide chain release factor 1 from Anaplasma phagocytophilum (strain HZ).